A 413-amino-acid chain; its full sequence is Serine hydroxymethyltransferase (413 aa).

(6S)-5,6,7,8-tetrahydrofolate-binding positions include L117 and 121–123; that span reads GHL. The residue at position 226 (K226) is an N6-(pyridoxal phosphate)lysine. (6S)-5,6,7,8-tetrahydrofolate contacts are provided by residues E241 and 349-351; that span reads SPF.

It belongs to the SHMT family. In terms of assembly, homodimer. Requires pyridoxal 5'-phosphate as cofactor.

The protein localises to the cytoplasm. The enzyme catalyses (6R)-5,10-methylene-5,6,7,8-tetrahydrofolate + glycine + H2O = (6S)-5,6,7,8-tetrahydrofolate + L-serine. Its pathway is one-carbon metabolism; tetrahydrofolate interconversion. It functions in the pathway amino-acid biosynthesis; glycine biosynthesis; glycine from L-serine: step 1/1. In terms of biological role, catalyzes the reversible interconversion of serine and glycine with tetrahydrofolate (THF) serving as the one-carbon carrier. This reaction serves as the major source of one-carbon groups required for the biosynthesis of purines, thymidylate, methionine, and other important biomolecules. Also exhibits THF-independent aldolase activity toward beta-hydroxyamino acids, producing glycine and aldehydes, via a retro-aldol mechanism. This Halalkalibacterium halodurans (strain ATCC BAA-125 / DSM 18197 / FERM 7344 / JCM 9153 / C-125) (Bacillus halodurans) protein is Serine hydroxymethyltransferase.